Here is a 118-residue protein sequence, read N- to C-terminus: Large ribosomal subunit protein uL18 (118 aa).

Belongs to the universal ribosomal protein uL18 family. As to quaternary structure, part of the 50S ribosomal subunit; part of the 5S rRNA/L5/L18/L25 subcomplex. Contacts the 5S and 23S rRNAs.

This is one of the proteins that bind and probably mediate the attachment of the 5S RNA into the large ribosomal subunit, where it forms part of the central protuberance. The polypeptide is Large ribosomal subunit protein uL18 (Rickettsia typhi (strain ATCC VR-144 / Wilmington)).